The sequence spans 339 residues: Phosphate acyltransferase (339 aa).

The protein belongs to the PlsX family. As to quaternary structure, homodimer. Probably interacts with PlsY.

The protein resides in the cytoplasm. It catalyses the reaction a fatty acyl-[ACP] + phosphate = an acyl phosphate + holo-[ACP]. It functions in the pathway lipid metabolism; phospholipid metabolism. Its function is as follows. Catalyzes the reversible formation of acyl-phosphate (acyl-PO(4)) from acyl-[acyl-carrier-protein] (acyl-ACP). This enzyme utilizes acyl-ACP as fatty acyl donor, but not acyl-CoA. The sequence is that of Phosphate acyltransferase from Brachyspira hyodysenteriae (strain ATCC 49526 / WA1).